The primary structure comprises 418 residues: Serine hydroxymethyltransferase (418 aa).

Residues Leu-121 and 125-127 (GHL) contribute to the (6S)-5,6,7,8-tetrahydrofolate site. Lys-230 carries the N6-(pyridoxal phosphate)lysine modification. Residue 356–358 (SPF) coordinates (6S)-5,6,7,8-tetrahydrofolate.

Belongs to the SHMT family. As to quaternary structure, homodimer. It depends on pyridoxal 5'-phosphate as a cofactor.

The protein localises to the cytoplasm. It carries out the reaction (6R)-5,10-methylene-5,6,7,8-tetrahydrofolate + glycine + H2O = (6S)-5,6,7,8-tetrahydrofolate + L-serine. Its pathway is one-carbon metabolism; tetrahydrofolate interconversion. It participates in amino-acid biosynthesis; glycine biosynthesis; glycine from L-serine: step 1/1. Catalyzes the reversible interconversion of serine and glycine with tetrahydrofolate (THF) serving as the one-carbon carrier. This reaction serves as the major source of one-carbon groups required for the biosynthesis of purines, thymidylate, methionine, and other important biomolecules. Also exhibits THF-independent aldolase activity toward beta-hydroxyamino acids, producing glycine and aldehydes, via a retro-aldol mechanism. The chain is Serine hydroxymethyltransferase from Shewanella piezotolerans (strain WP3 / JCM 13877).